We begin with the raw amino-acid sequence, 488 residues long: Leucine-rich repeat-containing protein 74A (488 aa).

LRR repeat units lie at residues 134-155, 162-182, 191-212, 219-239, 247-268, 275-296, 303-324, and 331-351; these read AVTKLELEDNCIMEEGVLSLVE, YLQEMNISNNHLGLEGARIIS, SIWSLELSGNDFKEDSAALLCQ, QIKKLDLSHNQFSDVGGEHLG, GLTSLDLSWNNFHTRGAVALCN, TLTKLDLSMNGFGNEVALALGE, CLVYLDIGGNDIGNEGASKISK, and SLRVLKLFLNPINMDGAILLI.

The chain is Leucine-rich repeat-containing protein 74A from Homo sapiens (Human).